Reading from the N-terminus, the 65-residue chain is MKIAEIKEMTTNDLVERVEAETANYNQMVINHSISPLENPAQIKQLRRTIARMKTELRQRELNNK.

The protein belongs to the universal ribosomal protein uL29 family.

The sequence is that of Large ribosomal subunit protein uL29 from Bacteroides thetaiotaomicron (strain ATCC 29148 / DSM 2079 / JCM 5827 / CCUG 10774 / NCTC 10582 / VPI-5482 / E50).